A 368-amino-acid chain; its full sequence is Ribosomal RNA large subunit methyltransferase M (368 aa).

S-adenosyl-L-methionine contacts are provided by residues serine 189, 222–225, aspartate 241, aspartate 261, and aspartate 278; that span reads CPGG. Lysine 307 serves as the catalytic Proton acceptor.

This sequence belongs to the class I-like SAM-binding methyltransferase superfamily. RNA methyltransferase RlmE family. RlmM subfamily. As to quaternary structure, monomer.

The protein resides in the cytoplasm. It catalyses the reaction cytidine(2498) in 23S rRNA + S-adenosyl-L-methionine = 2'-O-methylcytidine(2498) in 23S rRNA + S-adenosyl-L-homocysteine + H(+). Catalyzes the 2'-O-methylation at nucleotide C2498 in 23S rRNA. This Yersinia enterocolitica serotype O:8 / biotype 1B (strain NCTC 13174 / 8081) protein is Ribosomal RNA large subunit methyltransferase M.